Reading from the N-terminus, the 142-residue chain is Large ribosomal subunit protein bL21 (142 aa).

Over residues 73-84 the composition is skewed to basic residues; the sequence is KRRRQNSKRTRG. The tract at residues 73 to 142 is disordered; the sequence is KRRRQNSKRT…KAAAKAESAE (70 aa). A compositionally biased stretch (basic and acidic residues) spans 107-125; sequence KAAEKKAPKADAAEGEAAK. Positions 126 to 135 are enriched in basic residues; the sequence is PKKAAPKKAA.

The protein belongs to the bacterial ribosomal protein bL21 family. Part of the 50S ribosomal subunit. Contacts protein L20.

In terms of biological role, this protein binds to 23S rRNA in the presence of protein L20. The sequence is that of Large ribosomal subunit protein bL21 from Brucella canis (strain ATCC 23365 / NCTC 10854 / RM-666).